A 263-amino-acid polypeptide reads, in one-letter code: Gap junction beta-6 protein (263 aa).

Over 1–19 (MDWGALQTILGGVNKHSTS) the chain is Cytoplasmic. A helical membrane pass occupies residues 20–40 (IGKIWLTVLFIFRIMILVVAA). At 41-75 (ERVWGDEQDDFICNTLQPGCKNVCYDHFFPISHIR) the chain is on the extracellular side. A helical transmembrane segment spans residues 76-96 (LWALQLIFVSTPALLVAMHVA). The Cytoplasmic segment spans residues 97–137 (YRRHEKKRQFRKGDQKCEYKDIEEIRTQRFRIEGTLWWTYT). The helical transmembrane segment at 138 to 158 (CSIFFRLVFEAVFMYAFYFMY) threads the bilayer. The Extracellular portion of the chain corresponds to 159–189 (DGFRMPRLMKCSAWPCPNTVDCFVSRPTEKT). A helical membrane pass occupies residues 190–210 (VFTIFMIAVSSICILLNVAEL). Residues 211–263 (CYLLTKFFLRRSRKAGNQKHHPNHENKEETKQNEMNELISDSCQNTVIGFTSS) are Cytoplasmic-facing.

It belongs to the connexin family. Beta-type (group I) subfamily. As to quaternary structure, a connexon is composed of a hexamer of connexins. In terms of tissue distribution, exclusively expressed in the cochlea of the inner ear, where it is found in cells of the tegmentum vasculosum, cuboidal cells, supporting cells and clear cells.

It is found in the cell membrane. Its subcellular location is the cell junction. It localises to the gap junction. Functionally, one gap junction consists of a cluster of closely packed pairs of transmembrane channels, the connexons, through which materials of low MW diffuse from one cell to a neighboring cell. The protein is Gap junction beta-6 protein (GJB6) of Gallus gallus (Chicken).